A 149-amino-acid polypeptide reads, in one-letter code: Transcriptional repressor NrdR (149 aa).

A zinc finger spans residues 3-34 (CPFCFAVDTKVIDSRLVGEGSSVRRRRQCLVC). Residues 49–139 (PRVVKSNDVR…VYRSFEDIKE (91 aa)) form the ATP-cone domain.

This sequence belongs to the NrdR family. Zn(2+) serves as cofactor.

Functionally, negatively regulates transcription of bacterial ribonucleotide reductase nrd genes and operons by binding to NrdR-boxes. The sequence is that of Transcriptional repressor NrdR from Escherichia coli O139:H28 (strain E24377A / ETEC).